Consider the following 272-residue polypeptide: Zinc finger protein 32 (272 aa).

The segment covering 50 to 65 has biased composition (basic and acidic residues); that stretch reads RREKLEQKSPESKALQ. The tract at residues 50 to 69 is disordered; the sequence is RREKLEQKSPESKALQEDSP. 3 C2H2-type zinc fingers span residues 76 to 98, 104 to 126, and 132 to 154; these read YDCQ…ERIH, FECT…QRIH, and YQCK…ERLH. Residues Cys-78, Cys-81, His-94, His-98, Cys-106, Cys-109, His-122, His-126, Ser-140, Gln-143, Gly-156, Tyr-160, Phe-197, Lys-200, Leu-213, Ala-217, Cys-246, Cys-249, His-262, and Cys-266 each contribute to the Zn(2+) site. C2H2-type zinc fingers lie at residues 160-182 and 188-210; these read YECA…RRVH and YRCD…IRVH. The segment at 216-238 adopts a C2H2-type 6 zinc-finger fold; that stretch reads YACSHCRKSFHTRGNCLLHGKVH. The CCHC-type zinc finger occupies 244-266; that stretch reads YLCGQCGKSFTQRGSLAVHQRSC.

The protein belongs to the krueppel C2H2-type zinc-finger protein family.

The protein resides in the nucleus. In terms of biological role, may be involved in transcriptional regulation. This chain is Zinc finger protein 32 (Znf32), found in Mus musculus (Mouse).